A 156-amino-acid chain; its full sequence is Arginine repressor (156 aa).

The protein belongs to the ArgR family.

The protein resides in the cytoplasm. The protein operates within amino-acid biosynthesis; L-arginine biosynthesis [regulation]. Its function is as follows. Regulates arginine biosynthesis genes. This chain is Arginine repressor, found in Citrobacter koseri (strain ATCC BAA-895 / CDC 4225-83 / SGSC4696).